The following is a 212-amino-acid chain: Outer-membrane lipoprotein carrier protein (212 aa).

The N-terminal stretch at 1 to 29 (MSSARRRALGFSFQALLLCAAGWHGAAQA) is a signal peptide.

The protein belongs to the LolA family. As to quaternary structure, monomer.

The protein resides in the periplasm. In terms of biological role, participates in the translocation of lipoproteins from the inner membrane to the outer membrane. Only forms a complex with a lipoprotein if the residue after the N-terminal Cys is not an aspartate (The Asp acts as a targeting signal to indicate that the lipoprotein should stay in the inner membrane). The sequence is that of Outer-membrane lipoprotein carrier protein from Leptothrix cholodnii (strain ATCC 51168 / LMG 8142 / SP-6) (Leptothrix discophora (strain SP-6)).